The chain runs to 1068 residues: Carbamoyl phosphate synthase large chain (1068 aa).

Residues 1–401 are carboxyphosphate synthetic domain; the sequence is MPLNKDIKKV…AFLKGTRSLE (401 aa). 12 residues coordinate ATP: R129, R169, G175, G176, K208, V210, E215, G241, I242, H243, Q284, and E298. Residues 133 to 327 enclose the ATP-grasp 1 domain; it reads RNVMSRINGP…IAKVASKIAL (195 aa). Residues Q284, E298, and N300 each coordinate Mg(2+). Q284, E298, and N300 together coordinate Mn(2+). Positions 402–549 are oligomerization domain; the sequence is IGKYSLEHKK…YSTYDVYDEV (148 aa). A carbamoyl phosphate synthetic domain region spans residues 550-932; sequence EVSKNKKVIV…ALYKGFIGAN (383 aa). Residues 674–864 enclose the ATP-grasp 2 domain; the sequence is DELLEKLKIA…IVDIATRVML (191 aa). Residues R710, K749, L751, E755, G780, V781, H782, S783, Q823, and E835 each contribute to the ATP site. Mg(2+)-binding residues include Q823, E835, and N837. Residues Q823, E835, and N837 each coordinate Mn(2+). Residues 933 to 1068 enclose the MGS-like domain; that stretch reads MSIKKEKGTV…ETLYIFDLSN (136 aa). Residues 933-1068 are allosteric domain; that stretch reads MSIKKEKGTV…ETLYIFDLSN (136 aa).

It belongs to the CarB family. In terms of assembly, composed of two chains; the small (or glutamine) chain promotes the hydrolysis of glutamine to ammonia, which is used by the large (or ammonia) chain to synthesize carbamoyl phosphate. Tetramer of heterodimers (alpha,beta)4. Mg(2+) serves as cofactor. Requires Mn(2+) as cofactor.

It carries out the reaction hydrogencarbonate + L-glutamine + 2 ATP + H2O = carbamoyl phosphate + L-glutamate + 2 ADP + phosphate + 2 H(+). It catalyses the reaction hydrogencarbonate + NH4(+) + 2 ATP = carbamoyl phosphate + 2 ADP + phosphate + 2 H(+). Its pathway is amino-acid biosynthesis; L-arginine biosynthesis; carbamoyl phosphate from bicarbonate: step 1/1. It functions in the pathway pyrimidine metabolism; UMP biosynthesis via de novo pathway; (S)-dihydroorotate from bicarbonate: step 1/3. Functionally, large subunit of the glutamine-dependent carbamoyl phosphate synthetase (CPSase). CPSase catalyzes the formation of carbamoyl phosphate from the ammonia moiety of glutamine, carbonate, and phosphate donated by ATP, constituting the first step of 2 biosynthetic pathways, one leading to arginine and/or urea and the other to pyrimidine nucleotides. The large subunit (synthetase) binds the substrates ammonia (free or transferred from glutamine from the small subunit), hydrogencarbonate and ATP and carries out an ATP-coupled ligase reaction, activating hydrogencarbonate by forming carboxy phosphate which reacts with ammonia to form carbamoyl phosphate. This Clostridium botulinum (strain Kyoto / Type A2) protein is Carbamoyl phosphate synthase large chain.